Consider the following 286-residue polypeptide: Bifunctional protein FolD (286 aa).

NADP(+) contacts are provided by residues glycine 166–serine 168, serine 191, and isoleucine 232.

This sequence belongs to the tetrahydrofolate dehydrogenase/cyclohydrolase family. Homodimer.

The catalysed reaction is (6R)-5,10-methylene-5,6,7,8-tetrahydrofolate + NADP(+) = (6R)-5,10-methenyltetrahydrofolate + NADPH. It catalyses the reaction (6R)-5,10-methenyltetrahydrofolate + H2O = (6R)-10-formyltetrahydrofolate + H(+). The protein operates within one-carbon metabolism; tetrahydrofolate interconversion. Its function is as follows. Catalyzes the oxidation of 5,10-methylenetetrahydrofolate to 5,10-methenyltetrahydrofolate and then the hydrolysis of 5,10-methenyltetrahydrofolate to 10-formyltetrahydrofolate. In Herpetosiphon aurantiacus (strain ATCC 23779 / DSM 785 / 114-95), this protein is Bifunctional protein FolD.